The following is a 119-amino-acid chain: Circadian clock oscillator protein KaiB (119 aa).

It belongs to the KaiB family. In terms of assembly, may undergo a major conformational rearrangment; in the free state forms homooligomers. When bound to KaiC switches to a monomeric thioredoxin-fold (KaiB(fs)). The active oscillator complex is probably KaiC(6):KaiB(6).

Its function is as follows. Component of the KaiBC clock protein complex, which constitutes the main circadian regulator in cyanobacteria; it may modify the ATPase activity of KaiC. May be a metamorphic protein which reversibly switches between an inactive tetrameric fold and a rare, thioredoxin-like monomeric fold (KaiB(fs)). KaiB(fs) binds phospho-KaiC, and perhaps clock output effectors. The polypeptide is Circadian clock oscillator protein KaiB (Prochlorococcus marinus (strain MIT 9313)).